The primary structure comprises 47 residues: Type II secretion system protein N (47 aa).

Belongs to the GSP N family.

The protein resides in the cell inner membrane. In terms of biological role, involved in a type II secretion system (T2SS, formerly general secretion pathway, GSP) for the export of proteins. The polypeptide is Type II secretion system protein N (exeN) (Aeromonas salmonicida).